Here is an 874-residue protein sequence, read N- to C-terminus: Alanine--tRNA ligase (874 aa).

Residues His-562, His-566, Cys-665, and His-669 each contribute to the Zn(2+) site.

It belongs to the class-II aminoacyl-tRNA synthetase family. Requires Zn(2+) as cofactor.

It is found in the cytoplasm. The catalysed reaction is tRNA(Ala) + L-alanine + ATP = L-alanyl-tRNA(Ala) + AMP + diphosphate. In terms of biological role, catalyzes the attachment of alanine to tRNA(Ala) in a two-step reaction: alanine is first activated by ATP to form Ala-AMP and then transferred to the acceptor end of tRNA(Ala). Also edits incorrectly charged Ser-tRNA(Ala) and Gly-tRNA(Ala) via its editing domain. This chain is Alanine--tRNA ligase, found in Pseudomonas syringae pv. syringae (strain B728a).